The chain runs to 712 residues: MEIRMSDSSSKPVLVTCGLPYANGKAHIGHLRTYVPADIFARSLRKEGREVTFVCGSDTHGTPIVVNAEELGITPKELVEIYHKHFDETFKQLGVYFDAFGTTDDPENHNRTLDIVNRLIEKDYVYPKIIEIAYCPACNRFLPDRYVEGACPHCGETARGDECDQGCGKHLEPGELQNPVCTICGGPAEYRHQEHFFFKLSEFGDYLMDYLSNDLGGTTNARNYALGWVKQGLTDWCITRNLEWGVRFPGHEDLVVYVWVDAPIGYIAFTEEWAAQAGDSWEKFWKGEGEIVHFIGGDITYHHCIFWPAMLNGADYSVPTAVVASGMVKIEDKKFSKTRGYVVWVGEDYLDHGFHPDLLRYYLASYTSHTKELNFSWRVLQEKINAELVAVLGNFLYRTMLFAFKNYGEVPEGKLEPEVSAEIEEALKEVKEAMAEYEFKKAVDSAMALASFGNTYFQSHEPWKLIKEDRSACGQVIYNCLHLAKALSLIFEPVLPQTMETAWKGLGQESDIHASRYEEALVPLKAGTKLAKPELLFTKLEDDRIGEMEEIANQRVKAANAKKSAAKGGEKEPSKSEGMGPSEEAKVAEKAAKAEEKVPIETLPQIEYEDFAKLDIRVGKVLFVEPVKKSRKLLRVEVDIGEEKPRQLVAGMASYYTSEELVGKYVVVLANLKPAKLCGVESNGMMLAADDGGAIVAALMPDKEIKPGSRIR.

The short motif at 20–30 (PYANGKAHIGH) is the 'HIGH' region element. Zn(2+) contacts are provided by Cys151, Cys154, Cys163, and Cys167. Residues 334-338 (KFSKT) carry the 'KMSKS' region motif. Lys337 is a binding site for ATP. The tract at residues 559-585 (ANAKKSAAKGGEKEPSKSEGMGPSEEA) is disordered. A tRNA-binding domain is found at 610–712 (DFAKLDIRVG…KEIKPGSRIR (103 aa)).

It belongs to the class-I aminoacyl-tRNA synthetase family. MetG type 1 subfamily. As to quaternary structure, homodimer. The cofactor is Zn(2+).

It is found in the cytoplasm. It catalyses the reaction tRNA(Met) + L-methionine + ATP = L-methionyl-tRNA(Met) + AMP + diphosphate. Its function is as follows. Is required not only for elongation of protein synthesis but also for the initiation of all mRNA translation through initiator tRNA(fMet) aminoacylation. In Methanosarcina acetivorans (strain ATCC 35395 / DSM 2834 / JCM 12185 / C2A), this protein is Methionine--tRNA ligase.